A 715-amino-acid polypeptide reads, in one-letter code: MIYEGKAITVKALESGIVELKFDLKGESVNKFNRLTLNELRQAVDAIRADASVKGVIVSSGKDVFIVGADITEFVDNFKLPEAELVAGNLEANRIFNAFEDLEVPTVAAINGIALGGGLEMCLAADYRVMSTSARIGLPEVKLGIYPGFGGTVRLPRLIGSDNAIEWIAAGKENRAEDALKVGAVDAVVAPELLLAGALDLIKRAISGELDYKAKRQPKLEKLKLNAIEQMMAFETAKGFVAGQAGPNYPAPVEAIKSIQKAANFGRDKALEVEAAGFAKLAKTSVAESLIGLFLNDQELKRKAKAHDEIAHDVKQAAVLGAGIMGGGIAYQSAVKGTPILMKDIREEAIQLGLNEASKLLGNRVEKGRLTPAKMAEALNAIRPTLSYGDFANVDIVVEAVVENPKVKQAVLAEVEGQVKDDAILASNTSTISINLLAKALKRPENFVGMHFFNPVHMMPLVEVIRGEKSSDVAVATTVAYAKKMGKNPIVVNDCPGFLVNRVLFPYFGGFAKLVSAGVDFVRIDKVMEKFGWPMGPAYLMDVVGIDTGHHGRDVMAEGFPDRMKDERRSAVDALYESNRLGQKNGKGFYAYETDKRGKPKKVFDATVLDVLKPIVFEQREVTDEDIINWMMVPLCLETVRCLEDGIVETAAEADMGLVYGIGFPPFRGGALRYIDSIGVAEFVALADQYADLGPLYHPTAKLREMAKNGQRFFN.

An enoyl-CoA hydratase/isomerase region spans residues 1–190 (MIYEGKAITV…KVGAVDAVVA (190 aa)). Asp-297 is a binding site for substrate. The tract at residues 312–715 (HDVKQAAVLG…MAKNGQRFFN (404 aa)) is 3-hydroxyacyl-CoA dehydrogenase. Residues Met-325, Asp-344, 401 to 403 (VVE), Lys-408, and Ser-430 each bind NAD(+). Residue His-451 is the For 3-hydroxyacyl-CoA dehydrogenase activity of the active site. NAD(+) is bound at residue Asn-454. Substrate contacts are provided by Asn-501 and Tyr-660.

In the N-terminal section; belongs to the enoyl-CoA hydratase/isomerase family. This sequence in the C-terminal section; belongs to the 3-hydroxyacyl-CoA dehydrogenase family. Heterotetramer of two alpha chains (FadB) and two beta chains (FadA).

It catalyses the reaction a (3S)-3-hydroxyacyl-CoA + NAD(+) = a 3-oxoacyl-CoA + NADH + H(+). It carries out the reaction a (3S)-3-hydroxyacyl-CoA = a (2E)-enoyl-CoA + H2O. The catalysed reaction is a 4-saturated-(3S)-3-hydroxyacyl-CoA = a (3E)-enoyl-CoA + H2O. The enzyme catalyses (3S)-3-hydroxybutanoyl-CoA = (3R)-3-hydroxybutanoyl-CoA. It catalyses the reaction a (3Z)-enoyl-CoA = a 4-saturated (2E)-enoyl-CoA. It carries out the reaction a (3E)-enoyl-CoA = a 4-saturated (2E)-enoyl-CoA. It participates in lipid metabolism; fatty acid beta-oxidation. Functionally, involved in the aerobic and anaerobic degradation of long-chain fatty acids via beta-oxidation cycle. Catalyzes the formation of 3-oxoacyl-CoA from enoyl-CoA via L-3-hydroxyacyl-CoA. It can also use D-3-hydroxyacyl-CoA and cis-3-enoyl-CoA as substrate. The protein is Fatty acid oxidation complex subunit alpha of Pseudomonas putida (strain ATCC 700007 / DSM 6899 / JCM 31910 / BCRC 17059 / LMG 24140 / F1).